Here is a 469-residue protein sequence, read N- to C-terminus: Alpha-2C adrenergic receptor (469 aa).

The disordered stretch occupies residues 1 to 29; sequence MDLQLTTNSTDSGDRGGSSNESLQRQPPS. Over 1–36 the chain is Extracellular; the sequence is MDLQLTTNSTDSGDRGGSSNESLQRQPPSQYSPAEV. 2 N-linked (GlcNAc...) asparagine glycosylation sites follow: N8 and N20. Residues 37 to 62 traverse the membrane as a helical segment; sequence AGLAAVVSFLIVFTIVGNVLVVIAVL. Over 63 to 73 the chain is Cytoplasmic; it reads TSRALKAPQNL. A helical membrane pass occupies residues 74–99; sequence FQVSLASADILVATLVMPFSLANELM. Over 100-109 the chain is Extracellular; the sequence is NYWYFGKVWC. Residues C109 and C187 are joined by a disulfide bond. The helical transmembrane segment at 110-132 threads the bilayer; that stretch reads VIYLALDVLFCTSSIVHLCAISL. Residues 133–154 lie on the Cytoplasmic side of the membrane; sequence DRYWSVTQAVEYNLKRTPRRIK. A helical membrane pass occupies residues 155-175; that stretch reads GIIVTVWLISAVISFPPLISL. The Extracellular segment spans residues 176–194; it reads YRDPEDDLYPQCELNDETW. A helical transmembrane segment spans residues 195-216; that stretch reads YILSSCIGSFFAPCIIMVLVYV. At 217-386 the chain is on the cytoplasmic side; sequence RIYRVAKLRT…RKVTQAREKR (170 aa). 2 disordered regions span residues 232–261 and 279–353; these read KRTV…AAAA and HHHH…SRLS. Over residues 279-296 the composition is skewed to basic residues; it reads HHHHHLHHHHHHHHHQLR. The segment covering 301-310 has biased composition (acidic residues); sequence LEDIELEESS. Positions 331–353 are enriched in low complexity; sequence RGFSFSFSSTKGGQSAGAGSRLS. The chain crosses the membrane as a helical span at residues 387 to 407; the sequence is FTFVLAVVMGVFVVCWFPFFF. The Extracellular segment spans residues 408 to 427; it reads TYSLYGICREACQVPETLFK. Residues 428–448 form a helical membrane-spanning segment; sequence FFFWIGYCNSSLNPVIYTIFN. The Cytoplasmic segment spans residues 449-469; that stretch reads QDFRRSFKHILFKKKKKTSLQ.

The protein belongs to the G-protein coupled receptor 1 family. Adrenergic receptor subfamily. ADRA2C sub-subfamily.

Its subcellular location is the cell membrane. In terms of biological role, alpha-2 adrenergic receptors mediate the catecholamine-induced inhibition of adenylate cyclase through the action of G proteins. The protein is Alpha-2C adrenergic receptor (ADRA2C) of Didelphis virginiana (North American opossum).